The chain runs to 311 residues: MNYVEITMMINHELEPFIADILNEVGANGVVIEDSLELQKGRIETFGEIYELNPDDFPEEDVRVKVYFSELDYDASVIEQIKEKVDALNDVDVTRLEFSTHTVQEEDWANEWKNHFHAFKVSDKFVIVPSWESYDGLQDGEHAIHLDPGMAFGTGDHATTSMCLKLIEKYVEKGQSIVDVGTGSGILSIAAHKLGAKPIKALDLDSVAVKVAEDNFEKNDCLDAIQAEPGNLLKGETEKRDVIFANILAHIVDMMIDDSYALLNDNGLLITSGIIEEKEEMIIDHLKGVGYTIVEVMRDSGWVAIAARKEA.

S-adenosyl-L-methionine is bound by residues Thr-160, Gly-181, Asp-203, and Asn-246.

Belongs to the methyltransferase superfamily. PrmA family.

The protein resides in the cytoplasm. The enzyme catalyses L-lysyl-[protein] + 3 S-adenosyl-L-methionine = N(6),N(6),N(6)-trimethyl-L-lysyl-[protein] + 3 S-adenosyl-L-homocysteine + 3 H(+). Methylates ribosomal protein L11. This Macrococcus caseolyticus (strain JCSC5402) (Macrococcoides caseolyticum) protein is Ribosomal protein L11 methyltransferase.